The following is a 106-amino-acid chain: Small ribosomal subunit protein uS10 (106 aa).

The protein belongs to the universal ribosomal protein uS10 family. As to quaternary structure, part of the 30S ribosomal subunit.

Functionally, involved in the binding of tRNA to the ribosomes. This Synechococcus sp. (strain CC9605) protein is Small ribosomal subunit protein uS10.